Consider the following 349-residue polypeptide: KH domain-containing, RNA-binding, signal transduction-associated protein 2 (349 aa).

One can recognise a KH domain in the interval 65–135 (LIPVKQYPKF…HLSDELHVLI (71 aa)). Disordered regions lie at residues 182-284 (EDSG…DDQT) and 319-349 (PEEWATTRSSLKAPPQRSARGGYREHPYGRY). 2 positions are modified to omega-N-methylarginine: R230 and R240. The segment covering 340 to 349 (GYREHPYGRY) has biased composition (basic and acidic residues).

Belongs to the KHDRBS family. As to quaternary structure, self-associates to form homooligomers. Interacts with KHDRBS1/SAM68; heterooligomer formation of KHDRBS family proteins may modulate RNA substrate specificity. Interacts with RBMX. Interacts with SAFB, SFRS9 and YTHDC1. Interacts with FYN and PLCG1 (via SH3 domain). Interacts (phosphorylated) with FYN, GRB2, PLCG1 and RASA1 (via SH2 domain). In terms of processing, methylated. Tyrosine phosphorylated by FYN, PTK6 and SRC. Tyrosine phosphorylated by SRC during mitosis. As to expression, highly expressed in brain, lung, kidney and small intestine. Weakly expressed in placenta, liver, spleen, thymus, ovary and colon.

The protein localises to the nucleus. Functionally, RNA-binding protein that plays a role in the regulation of alternative splicing and influences mRNA splice site selection and exon inclusion. Binds both poly(A) and poly(U) homopolymers. Phosphorylation by PTK6 inhibits its RNA-binding ability. Induces an increased concentration-dependent incorporation of exon in CD44 pre-mRNA by direct binding to purine-rich exonic enhancer. Can regulate alternative splicing of NRXN1 in the laminin G-like domain 6 containing the evolutionary conserved neurexin alternative spliced segment 4 (AS4) involved in neurexin selective targeting to postsynaptic partners. Regulates cell-type specific alternative splicing of NRXN1 at AS4 and acts synergystically with SAM68 in exon skipping. In contrast acts antagonistically with SAM68 in NRXN3 exon skipping at AS4. Its phosphorylation by FYN inhibits its ability to regulate splice site selection. May function as an adapter protein for Src kinases during mitosis. This is KH domain-containing, RNA-binding, signal transduction-associated protein 2 (KHDRBS2) from Homo sapiens (Human).